Consider the following 127-residue polypeptide: Small ribosomal subunit protein uS11 (127 aa).

It belongs to the universal ribosomal protein uS11 family. As to quaternary structure, part of the 30S ribosomal subunit. Interacts with proteins S7 and S18. Binds to IF-3.

Located on the platform of the 30S subunit, it bridges several disparate RNA helices of the 16S rRNA. Forms part of the Shine-Dalgarno cleft in the 70S ribosome. In Streptococcus thermophilus (strain CNRZ 1066), this protein is Small ribosomal subunit protein uS11.